Reading from the N-terminus, the 861-residue chain is MAGPGPGAALESPRQLLGRVRFLAEAARSLRAGLPLPAALAFVPREVLYKLYKDPAGPSRVLLPVWEAEGLGLRVGAVGAAPGTGSGPLRAARDSIELRRGACVRTTGEELCNGHGLWVKLTKEQLAEHLSDCSLDEGWLLVCRPAEGGARLVPIDTPDHLQRQQQLFGVDYRPVLRWEQVVDLTYSHRLGSRPQPAEAYTEAIQRLLYVPPTWTYECDEDLIHFLYDHLGKEDENLGSVKQYVESIDVSSYTEEFNVSCLTDSNADTYWESDGSQCQHWVRLTMKKGTIVKKLLLTVDTTDDNFMPKRVVVYGGEGDNLKKLSDVNIDETLIGDVCVLEDMTVHLPIIEIRIVECRDDGIDVRLRGVKIKSSRQRELGLNADLFQPASLVRYPRLEGTDPEVLYRRAVLLQRFIKILDSVLHHLVPAWDHTLGTFSEIKQVKQFLLLSRQRPSLVAQCLRDSESSKPSFMPRLYINRRLAMEHRACPSRDPACKNAVFTQVYEGLKPSDKYEKPLDYRWPMRYDQWWECKFIAEGIIDQGGGFRDSLADMSEELCPSSADTPVPLPFFVRTANQGNGTGEARDMYVPNPSCRDFAKYEWIGQLMGAALRGKEFLVLALPGFVWKQLSGEEVSWSKDFPAVDSVLVKLLEVMEGVDKETFEFKFGKELTFTTVLSDQQVVELIPGGTGIVVEYEDRSRFIQLVRKARLEESKEQVAAMQAGLLKVVPQAVLDLLTWQELEKKVCGDPEVTVDALRKLTRFEDFEPSDTRVQYFWEALNNFTNEDRSRFLRFVTGRSRLPARIYIYPDKLGYETTDALPESSTCSSTLFLPHYASAKVCEEKLRYAAYNCVAIDTDMSPWEE.

Position 2 is an N-acetylalanine (Ala-2). Ser-12 carries the phosphoserine modification. The region spanning 219–397 (DEDLIHFLYD…ASLVRYPRLE (179 aa)) is the DOC domain. In terms of domain architecture, HECT spans 512–857 (YEKPLDYRWP…NCVAIDTDMS (346 aa)). The Glycyl thioester intermediate role is filled by Cys-823.

Interacts with TRIOBP. Interacts with STX8.

It is found in the cytoplasm. It localises to the perinuclear region. The catalysed reaction is S-ubiquitinyl-[E2 ubiquitin-conjugating enzyme]-L-cysteine + [acceptor protein]-L-lysine = [E2 ubiquitin-conjugating enzyme]-L-cysteine + N(6)-ubiquitinyl-[acceptor protein]-L-lysine.. It functions in the pathway protein modification; protein ubiquitination. E3 ubiquitin ligases accepts ubiquitin from an E2 ubiquitin-conjugating enzyme in the form of a thioester and then directly transfers the ubiquitin to targeted substrates. Mediates ubiquitination of TRIOBP and its subsequent proteasomal degradation, thus facilitating cell cycle progression by regulating the turn-over of TRIOBP. Also mediates ubiquitination of STX8. The sequence is that of E3 ubiquitin-protein ligase HECTD3 (Hectd3) from Mus musculus (Mouse).